The chain runs to 149 residues: 3-dehydroquinate dehydratase (149 aa).

The active-site Proton acceptor is the Tyr-21. Substrate is bound by residues Asn-73, His-79, and Asp-86. His-99 functions as the Proton donor in the catalytic mechanism. Substrate-binding positions include 100–101 and Arg-110; that span reads LT.

The protein belongs to the type-II 3-dehydroquinase family. Homododecamer.

It carries out the reaction 3-dehydroquinate = 3-dehydroshikimate + H2O. It participates in metabolic intermediate biosynthesis; chorismate biosynthesis; chorismate from D-erythrose 4-phosphate and phosphoenolpyruvate: step 3/7. Catalyzes a trans-dehydration via an enolate intermediate. This Thermus thermophilus (strain ATCC BAA-163 / DSM 7039 / HB27) protein is 3-dehydroquinate dehydratase.